A 260-amino-acid chain; its full sequence is Mitochondrial import inner membrane translocase subunit Tim29 (260 aa).

The transit peptide at 1-31 (MAAAALRRFWSRRRAEAGDAVVAKPGVWARL) directs the protein to the mitochondrion. The Mitochondrial matrix segment spans residues 32 to 59 (GSWARALLRDYAEACRDASAEARARPGR). The helical transmembrane segment at 60–77 (AAVYVGLLGGAAACFTLA) threads the bilayer. The Mitochondrial intermembrane portion of the chain corresponds to 78 to 260 (PSEGAFEEAL…HSLVQAEAPR (183 aa)).

Component of the TIM22 complex, which core is composed of TIMM22, associated with TIMM10 (TIMM10A and/or TIMM10B), TIMM9, AGK and TIMM29. Interacts with TIMM10B; the interaction is direct. Interacts with TOMM40; linking the TIM22 complex to the TOM complex. Interacts with TIMM22 (when oxidized); the interaction is direct.

It is found in the mitochondrion inner membrane. Functionally, component of the TIM22 complex, a complex that mediates the import and insertion of multi-pass transmembrane proteins into the mitochondrial inner membrane. The TIM22 complex forms a twin-pore translocase that uses the membrane potential as the external driving force. Required for the stability of the TIM22 complex and functions in the assembly of the TIMM22 protein into the TIM22 complex. May facilitate cooperation between TIM22 and TOM complexes by interacting with TOMM40. This chain is Mitochondrial import inner membrane translocase subunit Tim29, found in Homo sapiens (Human).